Reading from the N-terminus, the 378-residue chain is Protein RecA (378 aa).

79–86 provides a ligand contact to ATP; sequence GPESSGKT.

This sequence belongs to the RecA family.

The protein resides in the cytoplasm. Its function is as follows. Can catalyze the hydrolysis of ATP in the presence of single-stranded DNA, the ATP-dependent uptake of single-stranded DNA by duplex DNA, and the ATP-dependent hybridization of homologous single-stranded DNAs. It interacts with LexA causing its activation and leading to its autocatalytic cleavage. The sequence is that of Protein RecA from Streptococcus pyogenes serotype M2 (strain MGAS10270).